A 185-amino-acid polypeptide reads, in one-letter code: Ribosome-recycling factor (185 aa).

This sequence belongs to the RRF family.

Its subcellular location is the cytoplasm. Functionally, responsible for the release of ribosomes from messenger RNA at the termination of protein biosynthesis. May increase the efficiency of translation by recycling ribosomes from one round of translation to another. The chain is Ribosome-recycling factor from Shewanella loihica (strain ATCC BAA-1088 / PV-4).